The chain runs to 301 residues: Lipoyl synthase (301 aa).

Positions 53, 58, 64, 79, 83, 86, and 290 each coordinate [4Fe-4S] cluster. One can recognise a Radical SAM core domain in the interval tryptophan 65–lysine 279.

This sequence belongs to the radical SAM superfamily. Lipoyl synthase family. Requires [4Fe-4S] cluster as cofactor.

It localises to the cytoplasm. The enzyme catalyses [[Fe-S] cluster scaffold protein carrying a second [4Fe-4S](2+) cluster] + N(6)-octanoyl-L-lysyl-[protein] + 2 oxidized [2Fe-2S]-[ferredoxin] + 2 S-adenosyl-L-methionine + 4 H(+) = [[Fe-S] cluster scaffold protein] + N(6)-[(R)-dihydrolipoyl]-L-lysyl-[protein] + 4 Fe(3+) + 2 hydrogen sulfide + 2 5'-deoxyadenosine + 2 L-methionine + 2 reduced [2Fe-2S]-[ferredoxin]. It functions in the pathway protein modification; protein lipoylation via endogenous pathway; protein N(6)-(lipoyl)lysine from octanoyl-[acyl-carrier-protein]: step 2/2. Its function is as follows. Catalyzes the radical-mediated insertion of two sulfur atoms into the C-6 and C-8 positions of the octanoyl moiety bound to the lipoyl domains of lipoate-dependent enzymes, thereby converting the octanoylated domains into lipoylated derivatives. In Leptospira interrogans serogroup Icterohaemorrhagiae serovar Lai (strain 56601), this protein is Lipoyl synthase.